Consider the following 468-residue polypeptide: Peroxisome proliferator-activated receptor alpha (468 aa).

A DNA-binding region (nuclear receptor) is located at residues 99 to 173 (NIECRICGDK…VGMSHNAIRF (75 aa)). 2 consecutive NR C4-type zinc fingers follow at residues 102-122 (CRIC…CEGC) and 139-161 (CDRS…FHKC). The region spanning 239–466 (FVIHDMETLC…HPLLQEIYRD (228 aa)) is the NR LBD domain. The indeglitazar site is built by serine 280, tyrosine 314, and tyrosine 464. The segment at 304 to 433 (DQVTLLKYGV…PKLLQKMADL (130 aa)) is required for heterodimerization with RXRA.

This sequence belongs to the nuclear hormone receptor family. NR1 subfamily. Heterodimer; with RXRA. This heterodimerization is required for DNA binding and transactivation activity. Interacts with NCOA3 coactivator. Interacts with CITED2; the interaction stimulates its transcriptional activity. Also interacts with PPARBP in vitro. Interacts with AKAP13, LPIN1, PRDM16 and coactivator NCOA6. Interacts with ASXL1 and ASXL2. Interacts with PER2. Interacts with SIRT1; the interaction seems to be modulated by NAD(+) levels. Interacts with CRY1 and CRY2. In hepatocytes, interacts with PAQR3 and HUWE1; the interactions promote PPARA poylubiquitination and HUWE1-mediated degradation. In terms of processing, ubiquitinated by E3 ubiquitin-protein ligase HUWE1; leading to proteasomal degradation. Post-translationally, phosphorylated. Skeletal muscle, liver, heart and kidney. Expressed in monocytes.

The protein resides in the nucleus. Functionally, ligand-activated transcription factor. Key regulator of lipid metabolism. Activated by the endogenous ligand 1-palmitoyl-2-oleoyl-sn-glycerol-3-phosphocholine (16:0/18:1-GPC). Activated by oleylethanolamide, a naturally occurring lipid that regulates satiety. Receptor for peroxisome proliferators such as hypolipidemic drugs and fatty acids. Regulates the peroxisomal beta-oxidation pathway of fatty acids. Functions as a transcription activator for the ACOX1 and P450 genes. Transactivation activity requires heterodimerization with RXRA and is antagonized by NR2C2. May be required for the propagation of clock information to metabolic pathways regulated by PER2. In Homo sapiens (Human), this protein is Peroxisome proliferator-activated receptor alpha (PPARA).